A 1227-amino-acid chain; its full sequence is ATP-dependent helicase/nuclease subunit A (1227 aa).

The UvrD-like helicase ATP-binding domain occupies 37–503 (QKRTAEQIEA…ILLKENFRSQ (467 aa)). Residue 58–65 (ASAGSGKT) coordinates ATP. Residues 532-816 (SLVAGSPGQK…QLMTIHKSKG (285 aa)) form the UvrD-like helicase C-terminal domain.

The protein belongs to the helicase family. AddA subfamily. Heterodimer of AddA and AddB/RexB. It depends on Mg(2+) as a cofactor.

The enzyme catalyses Couples ATP hydrolysis with the unwinding of duplex DNA by translocating in the 3'-5' direction.. It carries out the reaction ATP + H2O = ADP + phosphate + H(+). Its function is as follows. The heterodimer acts as both an ATP-dependent DNA helicase and an ATP-dependent, dual-direction single-stranded exonuclease. Recognizes the chi site generating a DNA molecule suitable for the initiation of homologous recombination. The AddA nuclease domain is required for chi fragment generation; this subunit has the helicase and 3' -&gt; 5' nuclease activities. The protein is ATP-dependent helicase/nuclease subunit A of Streptococcus suis (strain 98HAH33).